A 487-amino-acid chain; its full sequence is Protein nucleotidyltransferase YdiU (487 aa).

Positions 86, 88, 89, 109, 121, 122, 172, and 179 each coordinate ATP. Asp-248 functions as the Proton acceptor in the catalytic mechanism. 2 residues coordinate Mg(2+): Asn-249 and Asp-258. Asp-258 is a binding site for ATP.

The protein belongs to the SELO family. Mg(2+) is required as a cofactor. It depends on Mn(2+) as a cofactor.

It catalyses the reaction L-seryl-[protein] + ATP = 3-O-(5'-adenylyl)-L-seryl-[protein] + diphosphate. It carries out the reaction L-threonyl-[protein] + ATP = 3-O-(5'-adenylyl)-L-threonyl-[protein] + diphosphate. The catalysed reaction is L-tyrosyl-[protein] + ATP = O-(5'-adenylyl)-L-tyrosyl-[protein] + diphosphate. The enzyme catalyses L-histidyl-[protein] + UTP = N(tele)-(5'-uridylyl)-L-histidyl-[protein] + diphosphate. It catalyses the reaction L-seryl-[protein] + UTP = O-(5'-uridylyl)-L-seryl-[protein] + diphosphate. It carries out the reaction L-tyrosyl-[protein] + UTP = O-(5'-uridylyl)-L-tyrosyl-[protein] + diphosphate. Nucleotidyltransferase involved in the post-translational modification of proteins. It can catalyze the addition of adenosine monophosphate (AMP) or uridine monophosphate (UMP) to a protein, resulting in modifications known as AMPylation and UMPylation. This Sphingopyxis alaskensis (strain DSM 13593 / LMG 18877 / RB2256) (Sphingomonas alaskensis) protein is Protein nucleotidyltransferase YdiU.